The following is a 237-amino-acid chain: Thiamine-phosphate synthase (237 aa).

Residues 57–61 (QLRDK) and Asn98 each bind 4-amino-2-methyl-5-(diphosphooxymethyl)pyrimidine. Residues Asp99 and Asp118 each coordinate Mg(2+). Residue Ser136 coordinates 4-amino-2-methyl-5-(diphosphooxymethyl)pyrimidine. 162 to 164 (TPT) is a 2-[(2R,5Z)-2-carboxy-4-methylthiazol-5(2H)-ylidene]ethyl phosphate binding site. Residue Lys165 coordinates 4-amino-2-methyl-5-(diphosphooxymethyl)pyrimidine. 2-[(2R,5Z)-2-carboxy-4-methylthiazol-5(2H)-ylidene]ethyl phosphate is bound at residue Gly193.

The protein belongs to the thiamine-phosphate synthase family. Mg(2+) is required as a cofactor.

The catalysed reaction is 2-[(2R,5Z)-2-carboxy-4-methylthiazol-5(2H)-ylidene]ethyl phosphate + 4-amino-2-methyl-5-(diphosphooxymethyl)pyrimidine + 2 H(+) = thiamine phosphate + CO2 + diphosphate. The enzyme catalyses 2-(2-carboxy-4-methylthiazol-5-yl)ethyl phosphate + 4-amino-2-methyl-5-(diphosphooxymethyl)pyrimidine + 2 H(+) = thiamine phosphate + CO2 + diphosphate. It carries out the reaction 4-methyl-5-(2-phosphooxyethyl)-thiazole + 4-amino-2-methyl-5-(diphosphooxymethyl)pyrimidine + H(+) = thiamine phosphate + diphosphate. It participates in cofactor biosynthesis; thiamine diphosphate biosynthesis; thiamine phosphate from 4-amino-2-methyl-5-diphosphomethylpyrimidine and 4-methyl-5-(2-phosphoethyl)-thiazole: step 1/1. Functionally, condenses 4-methyl-5-(beta-hydroxyethyl)thiazole monophosphate (THZ-P) and 2-methyl-4-amino-5-hydroxymethyl pyrimidine pyrophosphate (HMP-PP) to form thiamine monophosphate (TMP). The sequence is that of Thiamine-phosphate synthase from Mycolicibacterium gilvum (strain PYR-GCK) (Mycobacterium gilvum (strain PYR-GCK)).